We begin with the raw amino-acid sequence, 957 residues long: Mediator of RNA polymerase II transcription subunit 16 (957 aa).

Positions 855–883 (YTEVDAAPSGKTNAQGPPQQPQPQQQRRR) are disordered.

Belongs to the Mediator complex subunit 16 family. As to quaternary structure, component of the Mediator complex.

It localises to the nucleus. In terms of biological role, component of the Mediator complex, a coactivator involved in the regulated transcription of nearly all RNA polymerase II-dependent genes. Mediator functions as a bridge to convey information from gene-specific regulatory proteins to the basal RNA polymerase II transcription machinery. Mediator is recruited to promoters by direct interactions with regulatory proteins and serves as a scaffold for the assembly of a functional preinitiation complex with RNA polymerase II and the general transcription factors. The protein is Mediator of RNA polymerase II transcription subunit 16 (sin4) of Aspergillus clavatus (strain ATCC 1007 / CBS 513.65 / DSM 816 / NCTC 3887 / NRRL 1 / QM 1276 / 107).